The primary structure comprises 165 residues: Probable chemoreceptor glutamine deamidase CheD (165 aa).

This sequence belongs to the CheD family.

It carries out the reaction L-glutaminyl-[protein] + H2O = L-glutamyl-[protein] + NH4(+). Probably deamidates glutamine residues to glutamate on methyl-accepting chemotaxis receptors (MCPs), playing an important role in chemotaxis. The chain is Probable chemoreceptor glutamine deamidase CheD from Symbiobacterium thermophilum (strain DSM 24528 / JCM 14929 / IAM 14863 / T).